Here is a 292-residue protein sequence, read N- to C-terminus: Inositol oxygenase (292 aa).

Residues Arg-33 and 88–90 (DES) contribute to the substrate site. His-101, His-128, and Asp-129 together coordinate Fe cation. Substrate is bound by residues Lys-132 and 149 to 150 (GD). 3 residues coordinate Fe cation: His-201, His-227, and Asp-260. 227-228 (HS) provides a ligand contact to substrate.

Belongs to the myo-inositol oxygenase family. It depends on Fe cation as a cofactor.

Its subcellular location is the cytoplasm. The enzyme catalyses myo-inositol + O2 = D-glucuronate + H2O + H(+). It participates in polyol metabolism; myo-inositol degradation into D-glucuronate; D-glucuronate from myo-inositol: step 1/1. The chain is Inositol oxygenase (miox) from Dictyostelium discoideum (Social amoeba).